We begin with the raw amino-acid sequence, 658 residues long: Sodium/nucleoside cotransporter 1 (658 aa).

The Cytoplasmic portion of the chain corresponds to 1–75 (MEKASGRKSL…ARTFCQRHAS (75 aa)). The chain crosses the membrane as a helical span at residues 76-99 (LFKKILLGLLCLAYAAYFLAACIL). Over 100 to 104 (DFQRA) the chain is Extracellular. The chain crosses the membrane as a helical span at residues 105–123 (LALFVITCLVILVLLLHFL). At 124-142 (KKFLGKKLTRCLKPFKNSQ) the chain is on the cytoplasmic side. The helical transmembrane segment at 143–162 (LRLWIKRVFAGVSLVGLILW) threads the bilayer. At 163–173 (LALDTAQRPEQ) the chain is on the extracellular side. Residues 174 to 190 (LISFAGICMFVLILFAC) traverse the membrane as a helical segment. The Cytoplasmic segment spans residues 191-196 (SKHHSA). The chain crosses the membrane as a helical span at residues 197–217 (VSWRTVFWGLGLQFVFGLLVI). The Extracellular segment spans residues 218-256 (RTDPGFIAFQWLGDQVQIFLAYTVAGSSFVLGDTLVNDV). The chain crosses the membrane as a helical span at residues 257 to 278 (FAFQSLPIIIFFGCVMSILYYL). Over 279–289 (GLVQWVVQKIA) the chain is Cytoplasmic. The helical transmembrane segment at 290–313 (WFLQVTMRTTATETLAVAGNIFVG) threads the bilayer. The Extracellular portion of the chain corresponds to 314–332 (MTEAPLLIRPYLADLTLSE). A helical membrane pass occupies residues 333–355 (IHAVMTSGFATISGTVLGAFISF). Topologically, residues 356 to 361 (GIDASS) are cytoplasmic. The chain crosses the membrane as a helical span at residues 362 to 381 (LISASVMGAPCALALSKLVY). Topologically, residues 382–418 (PEEEESKFKSKEGVKLPRGKESNVLEAASNGATDAIA) are extracellular. Residues 419–441 (LVANVAANLVAFLAVLAFINAAL) traverse the membrane as a helical segment. Topologically, residues 442–452 (SWLGELVDIQG) are cytoplasmic. The chain crosses the membrane as a helical span at residues 453-474 (LTFQVICSYILRPMVYMMGVEW). The Extracellular portion of the chain corresponds to 475–529 (TDCPMVAEMVGIKFFTNEFVAYQQLSQYKKKRLSGMEEWIDGQKQWISVRAEVIT). A helical membrane pass occupies residues 530-553 (TFSLCGFANLSSIGITLGGLTSMV). Topologically, residues 554–564 (PHRKSDLSKVV) are cytoplasmic. Residues 565–587 (IRALFTGSCVSFISACVAGILYV) form a helical membrane-spanning segment. The Extracellular segment spans residues 588–658 (PRGAETDCVS…CGFYNNTVCA (71 aa)). Asparagine 653 carries an N-linked (GlcNAc...) asparagine glycan.

The protein belongs to the concentrative nucleoside transporter (CNT) (TC 2.A.41) family. In terms of processing, N-glycosylated. N-glycosylation is required for localization to the plasma membrane and the transporter activity.

It is found in the cell membrane. The protein localises to the apical cell membrane. The enzyme catalyses uridine(out) + Na(+)(out) = uridine(in) + Na(+)(in). It catalyses the reaction thymidine(out) + Na(+)(out) = thymidine(in) + Na(+)(in). The catalysed reaction is cytidine(out) + Na(+)(out) = cytidine(in) + Na(+)(in). It carries out the reaction adenosine(out) + Na(+)(out) = adenosine(in) + Na(+)(in). With respect to regulation, due to its high apparent affinity but slow transport, adenosine could act as a negative regulator of pyrimidine transport under some conditions. Its function is as follows. Sodium and pyrimidine nucleoside symporter of the plasma membrane that imports uridine, thymidine and cytidine into cells by coupling their transport to the transmembrane sodium electrochemical gradient. Also transports adenosine, an atypical substrate transported with high apparent affinity, but low maximum velocity. Therefore, exhibits the transport characteristics of the nucleoside transport system cit or N2 subtype (N2/cit). Involved in renal nucleoside (re)absorption. The protein is Sodium/nucleoside cotransporter 1 (SLC28A1) of Oryctolagus cuniculus (Rabbit).